We begin with the raw amino-acid sequence, 110 residues long: Small heat shock protein hspG11 (110 aa).

The sHSP domain occupies 30-110 (KTIIDILPPM…KSTSTSSTFR (81 aa)). The interval 78–110 (KDLNKQHNNNNNNNNNNNNLVIEKSTSTSSTFR) is disordered. Low complexity predominate over residues 85–96 (NNNNNNNNNNNN). Polar residues predominate over residues 101–110 (KSTSTSSTFR).

Belongs to the small heat shock protein (HSP20) family.

The sequence is that of Small heat shock protein hspG11 (hspG11) from Dictyostelium discoideum (Social amoeba).